A 329-amino-acid chain; its full sequence is tRNA (cytidine(32)/guanosine(34)-2'-O)-methyltransferase (329 aa).

Residues Gly-53, Trp-55, Asp-75, Asp-91, and Asp-116 each contribute to the S-adenosyl-L-methionine site. The active-site Proton acceptor is the Lys-156. The segment at 221–240 (DFNQLDGPTRIIVPFVTCGD) is required for binding to WDR6. Ser-271 is subject to Phosphoserine.

The protein belongs to the class I-like SAM-binding methyltransferase superfamily. RNA methyltransferase RlmE family. TRM7 subfamily. As to quaternary structure, interacts with WDR6; the interaction is direct, and required for 2'-O-methylation of position 34 in substrate tRNAs. In terms of tissue distribution, found in fetal brain, lung, liver and kidney. Widely expressed in adult tissue; with high expression in heart and liver, lower expression in skeletal muscle, kidney, and pancreas and also lowly expressed in brain and lung. In the adult brain, expressed in amygdala, caudate nucleus, corpus callosum, hippocampus and thalamus.

It localises to the cytoplasm. The protein resides in the nucleus. The enzyme catalyses cytidine(32)/guanosine(34) in tRNA + 2 S-adenosyl-L-methionine = 2'-O-methylcytidine(32)/2'-O-methylguanosine(34) in tRNA + 2 S-adenosyl-L-homocysteine + 2 H(+). With respect to regulation, inhibited by 2,6-diaminopurine (DAP); inhibition promotes UGA stop-codon readthrough during translation by misincorporation of tRNA(Trp) in the nascent polypeptide. Its function is as follows. Methylates the 2'-O-ribose of nucleotides at positions 32 and 34 of the tRNA anticodon loop of substrate tRNAs. Requisite for faithful cytoplasmic translation. Requires THADA for methylation of the nucleotide at position 32 of the anticodon loop of substrate tRNAs. Requires WDR6 for methylation of the nucleotide at position 34 of the anticodon loop of substrate tRNAs. Promotes translation efficiency of the UUU codon. Plays a role in neurogenesis. Required for expression of genes involved in neurogenesis, mitochondrial translation and energy generation, and lipid biosynthesis. Requisite for RNA-mediated gene silencing. May modify position 32 in tRNA(Arg(ACG)), tRNA(Arg(CCG)), tRNA(Arg(UCG)), tRNA(Cys(GCA)), tRNA(Cys(ACA)), tRNA(Gln(CUG)), tRNA(Gln(UUG)), tRNA(Gly(CCC)), tRNA(Leu(CAG))/tRNA(Leu(CAA)), tRNA(Leu(A/IAG)), tRNA(Leu(UAG)), tRNA(Phe(GAA)), tRNA(Pro(AGG))/tRNA(Pro(CGG))/tRNA(Pro(UGG)) and tRNA(Trp(CCA)), and position 34 in tRNA(Phe(GAA)), tRNA(Leu(CAA)), tRNA(Sec(UCA)), and tRNA(Trp(CCA)). This chain is tRNA (cytidine(32)/guanosine(34)-2'-O)-methyltransferase, found in Homo sapiens (Human).